A 366-amino-acid chain; its full sequence is Ribosomal RNA large subunit methyltransferase M (366 aa).

Residues S188, 221–224 (CPGG), D240, D260, and D277 contribute to the S-adenosyl-L-methionine site. K306 serves as the catalytic Proton acceptor.

Belongs to the class I-like SAM-binding methyltransferase superfamily. RNA methyltransferase RlmE family. RlmM subfamily. Monomer.

The protein localises to the cytoplasm. The enzyme catalyses cytidine(2498) in 23S rRNA + S-adenosyl-L-methionine = 2'-O-methylcytidine(2498) in 23S rRNA + S-adenosyl-L-homocysteine + H(+). In terms of biological role, catalyzes the 2'-O-methylation at nucleotide C2498 in 23S rRNA. This chain is Ribosomal RNA large subunit methyltransferase M, found in Salmonella newport (strain SL254).